Consider the following 116-residue polypeptide: MVGGEASAAVEKLVSGVRQAADFAEQFRSYSESEKQWKARMEFILRHLPDYRDPPDGGGRLDQLLSLSMVWANHLFLGCSYNKDLLDKVMEMADGIEVEDLPQFTTRSELMRKHQS.

Residue M1 is modified to N-acetylmethionine. In terms of domain architecture, XRN2-binding (XTBD) spans A24–S116.

The protein belongs to the CARF family. In terms of assembly, interacts with XRN2; the interaction is direct.

The polypeptide is CDKN2AIP N-terminal-like protein (Cdkn2aipnl) (Mus musculus (Mouse)).